A 471-amino-acid polypeptide reads, in one-letter code: MNPNQKLFALSGVAIALSVMNLLIGISNVGLNVSLHLKEKGTKQEENLTCTTITQNNTTVVENTYVNNTTIITKEPDLKAPSYLLLNKSLCSVEGWVVIAKDNAIRFGESEQIIVTREPYVSCDPSGCKMYALHQGTTIRNKHSNGTIHDRTAFRGLISTPLGTPPTVSNSDFICVGWSSTSCHDGVGRMTICIQGNNDNATATVYYNRRLTTTIKPWARNILRTQESECVCHNGTCAVVMTDGSASSQAYTKVMYFHKGLVIKEEPLKGSAKHIEECSCYGHNQKITCVCRDNWQGANRPIIEIDMNTLEHTSRYVCTGILTDTSRPGDKPSGDCSNPITGSPSAPGVKGFGFLNGDNTWLGRTISPRSRSGFEMLKIPNAGTDPNSRIAERQEIVDNNNWSGYSGSFIDYWDDDNECYNPCFYVELIRGRPEEAKYVWWTSNSLIALCGSPFPVGSGSFPDGAQIQYFS.

Over M1–K6 the chain is Intravirion. A helical transmembrane segment spans residues L7–S27. Residues S11–V33 form an involved in apical transport and lipid raft association region. The Virion surface segment spans residues N28–S471. Residues N32, N47, N56, N57, N67, N68, and N87 are each glycosylated (N-linked (GlcNAc...) asparagine; by host). Positions H36–N87 are hypervariable stalk region. The head of neuraminidase stretch occupies residues L90–S471. Intrachain disulfides connect C91-C419, C123-C128, C183-C230, C232-C237, C278-C291, C280-C289, C318-C336, and C423-C450. R117 provides a ligand contact to substrate. N145 is a glycosylation site (N-linked (GlcNAc...) asparagine; by host). Residue D150 is the Proton donor/acceptor of the active site. A substrate-binding site is contributed by R151. N-linked (GlcNAc...) asparagine; by host glycosylation is found at N200 and N234. Position 276–277 (E276–E277) interacts with substrate. R292 serves as a coordination point for substrate. Residues D293, G297, and D324 each contribute to the Ca(2+) site. Substrate is bound at residue R371. The N-linked (GlcNAc...) asparagine; by host glycan is linked to N401. Y405 acts as the Nucleophile in catalysis.

The protein belongs to the glycosyl hydrolase 34 family. In terms of assembly, homotetramer. Requires Ca(2+) as cofactor. N-glycosylated.

Its subcellular location is the virion membrane. The protein resides in the host apical cell membrane. The catalysed reaction is Hydrolysis of alpha-(2-&gt;3)-, alpha-(2-&gt;6)-, alpha-(2-&gt;8)- glycosidic linkages of terminal sialic acid residues in oligosaccharides, glycoproteins, glycolipids, colominic acid and synthetic substrates.. Its activity is regulated as follows. Inhibited by the neuraminidase inhibitors zanamivir (Relenza) and oseltamivir (Tamiflu). These drugs interfere with the release of progeny virus from infected cells and are effective against all influenza strains. Resistance to neuraminidase inhibitors is quite rare. In terms of biological role, catalyzes the removal of terminal sialic acid residues from viral and cellular glycoconjugates. Cleaves off the terminal sialic acids on the glycosylated HA during virus budding to facilitate virus release. Additionally helps virus spread through the circulation by further removing sialic acids from the cell surface. These cleavages prevent self-aggregation and ensure the efficient spread of the progeny virus from cell to cell. Otherwise, infection would be limited to one round of replication. Described as a receptor-destroying enzyme because it cleaves a terminal sialic acid from the cellular receptors. May facilitate viral invasion of the upper airways by cleaving the sialic acid moieties on the mucin of the airway epithelial cells. Likely to plays a role in the budding process through its association with lipid rafts during intracellular transport. May additionally display a raft-association independent effect on budding. Plays a role in the determination of host range restriction on replication and virulence. Sialidase activity in late endosome/lysosome traffic seems to enhance virus replication. The polypeptide is Neuraminidase (Influenza A virus (strain A/Duck/Germany/1949 H10N7)).